The sequence spans 322 residues: Probable uridine nucleosidase 2 (322 aa).

Active-site residues include D14 and H246.

It belongs to the IUNH family. Component of the NSH heterocomplex made of URH1/NSH1 and URH2/NSH2 which exhibits strong xanthosine nucleosidase activity. Interacts with URH1. Expressed in roots, seedlings and flowers.

The protein localises to the cytoplasm. It localises to the cytosol. It catalyses the reaction uridine + H2O = D-ribose + uracil. The catalysed reaction is inosine + H2O = hypoxanthine + D-ribose. It carries out the reaction xanthosine + H2O = D-ribose + xanthine. In terms of biological role, involved in pyrimidine breakdown, especially in response to dark stress. In the presence of URH1, exhibits efficient inosine and xanthosine hydrolytic activities. Support inosine breakdown especially during the late phase of senescence. This Arabidopsis thaliana (Mouse-ear cress) protein is Probable uridine nucleosidase 2.